Reading from the N-terminus, the 197-residue chain is Non-structural protein 5 (197 aa).

The span at 17–30 (IFKNESSSTTSTLS) shows a compositional bias: low complexity. Residues 17–36 (IFKNESSSTTSTLSGKSIGR) are disordered. Serine 67 is subject to Phosphoserine; by host CK1. Aspartate 92 lines the Mg(2+) pocket. A disordered region spans residues 131–167 (DHKKEKSKKDKSRKHYPRIEADSDSEDYVLDDSDSDD). A compositionally biased stretch (acidic residues) spans 152–165 (DSDSEDYVLDDSDS). Phosphoserine; by host is present on residues serine 153, serine 155, serine 163, and serine 165.

It belongs to the rotavirus NSP5 family. Homodimer. Interacts with VP1. Interacts with VP2. Interacts with NSP2; this interaction leads to up-regulation of NSP5 hyperphosphorylation and formation of virus factories. Interacts with NSP6. Participates in the selective exclusion of host proteins from stress granules (SG) and P bodies (PB). Also participates in the sequestration of these remodeled organelles in viral factories. It depends on Mg(2+) as a cofactor. O-glycosylated. In terms of processing, hyperphosphorylated on serine residues, when in dimeric form. Phosphorylation by host CK1 is required for the hyperphosphorylation of NSP5 dimer.

The protein resides in the host cytoplasm. Its function is as follows. Plays an essential role in the viral genome replication. Participates, together with NSP2, in the formation of viral factories (viroplasms), which are large inclusions in the host cytoplasm where replication intermediates are assembled and viral RNA replication takes place. Orchestrates the recruitment of viroplasmic proteins such as capsid proteins to these factories. Participates in the selective exclusion of host proteins from stress granules (SG) and P bodies (PB). Also participates in the sequestration of these remodeled organelles in viral factories. The sequence is that of Non-structural protein 5 from Homo sapiens (Human).